The chain runs to 249 residues: FMN reductase [NAD(P)H] (249 aa).

FMN contacts are provided by residues 11 to 15, glutamine 67, 134 to 136, and 173 to 175; these read HRSIR, PIG, and KPR.

It belongs to the flavin oxidoreductase frp family. Homodimer.

The catalysed reaction is FMNH2 + NADP(+) = FMN + NADPH + 2 H(+). The enzyme catalyses FMNH2 + NAD(+) = FMN + NADH + 2 H(+). Its activity is regulated as follows. FMN is a competitive inhibitor of NADH, and therefore leads to the preferential utilization of NADPH. Its function is as follows. Reduces FMNH(2) to FMN, with NADH or NADPH as reductant. It also reduces nitroaromatic compounds, quinones, chromates and azo dyes. It could supply the reduced form of FMN to luciferase-like protein and contribute to the degradation of aromatic compounds. This is FMN reductase [NAD(P)H] (nfrA2) from Bacillus subtilis (strain 168).